Here is a 399-residue protein sequence, read N- to C-terminus: Tryptophan synthase beta chain (399 aa).

K92 is modified (N6-(pyridoxal phosphate)lysine).

It belongs to the TrpB family. As to quaternary structure, tetramer of two alpha and two beta chains. Pyridoxal 5'-phosphate is required as a cofactor.

The catalysed reaction is (1S,2R)-1-C-(indol-3-yl)glycerol 3-phosphate + L-serine = D-glyceraldehyde 3-phosphate + L-tryptophan + H2O. The protein operates within amino-acid biosynthesis; L-tryptophan biosynthesis; L-tryptophan from chorismate: step 5/5. Functionally, the beta subunit is responsible for the synthesis of L-tryptophan from indole and L-serine. The polypeptide is Tryptophan synthase beta chain (Bordetella pertussis (strain Tohama I / ATCC BAA-589 / NCTC 13251)).